Here is a 706-residue protein sequence, read N- to C-terminus: G2/M phase-specific E3 ubiquitin-protein ligase (706 aa).

The segment at 11-51 (NLACVFCRKNDDCPNKYGEKKTKEKWNLTVHYYCLLMSSGI) adopts a C2HC pre-PHD-type zinc-finger fold. The PHD-type 1 zinc finger occupies 79 to 128 (LKCCVCKKNGASIGCVAPRCKRSYHFPCGLQRECIFQFTGNFASFCWNHR). The PHD-type 2; degenerate zinc-finger motif lies at 143–193 (PCTICLEFIEPIPSYNILRSPCCKNAWFHRDCLQVQAINAGVFFFRCTICS). Residues 237–286 (RCRCKEGRDYNAPDSKWEIKRCQCCGSSGTHLACSSLRSWEQNWECLECR) form a PHD-type 3 zinc finger. The HECT domain maps to 371–698 (IWTSALDAFR…IRNTLKLEKE (328 aa)).

It localises to the nucleus. The protein resides in the nucleolus. Its subcellular location is the cytoplasm. It catalyses the reaction S-ubiquitinyl-[E2 ubiquitin-conjugating enzyme]-L-cysteine + [acceptor protein]-L-lysine = [E2 ubiquitin-conjugating enzyme]-L-cysteine + N(6)-ubiquitinyl-[acceptor protein]-L-lysine.. It functions in the pathway protein modification; protein ubiquitination. In terms of biological role, E3 ubiquitin-protein ligase which accepts ubiquitin from an E2 ubiquitin-conjugating enzyme in the form of a thioester and then directly transfers the ubiquitin to targeted substrates. Essential in early embryonic development to prevent apoptotic death. The polypeptide is G2/M phase-specific E3 ubiquitin-protein ligase (G2E3) (Macaca fascicularis (Crab-eating macaque)).